A 276-amino-acid polypeptide reads, in one-letter code: Ribosomal RNA small subunit methyltransferase A (276 aa).

S-adenosyl-L-methionine is bound by residues N27, L29, G54, E75, D101, and N122.

This sequence belongs to the class I-like SAM-binding methyltransferase superfamily. rRNA adenine N(6)-methyltransferase family. RsmA subfamily.

Its subcellular location is the cytoplasm. It catalyses the reaction adenosine(1518)/adenosine(1519) in 16S rRNA + 4 S-adenosyl-L-methionine = N(6)-dimethyladenosine(1518)/N(6)-dimethyladenosine(1519) in 16S rRNA + 4 S-adenosyl-L-homocysteine + 4 H(+). Specifically dimethylates two adjacent adenosines (A1518 and A1519) in the loop of a conserved hairpin near the 3'-end of 16S rRNA in the 30S particle. May play a critical role in biogenesis of 30S subunits. This Brucella melitensis biotype 1 (strain ATCC 23456 / CCUG 17765 / NCTC 10094 / 16M) protein is Ribosomal RNA small subunit methyltransferase A.